A 104-amino-acid polypeptide reads, in one-letter code: L-rhamnose mutarotase (104 aa).

Position 18 (tyrosine 18) interacts with substrate. The active-site Proton donor is histidine 22. Residues tyrosine 41 and 76–77 each bind substrate; that span reads WW.

It belongs to the rhamnose mutarotase family. As to quaternary structure, homodimer.

The protein localises to the cytoplasm. The catalysed reaction is alpha-L-rhamnose = beta-L-rhamnose. Its pathway is carbohydrate metabolism; L-rhamnose metabolism. Functionally, involved in the anomeric conversion of L-rhamnose. This Shigella sonnei (strain Ss046) protein is L-rhamnose mutarotase.